The sequence spans 225 residues: MILPELFDLWQETLEWQPDGAQQARFQQLYDLILEGNQRFNLTRITQPEEFWEKHLWDSLSGLAWLQKSQPDLLTKSLSVIDLGTGAGFPGVPIAIAYPHWSVTLLDSTQKKINFLEEVIDKLELNNTKTRLGRAEIVGKNLKHNCAYDIVCLRAVGNVDICVNYALPFLKKTGIAILYRGQWSAQDSLSLEENLGKAGGKILEIASFTTPLSESVRHCLYISKK.

S-adenosyl-L-methionine is bound by residues G84, F89, 107–109 (DST), 135–136 (AE), and R154.

The protein belongs to the methyltransferase superfamily. RNA methyltransferase RsmG family.

The protein localises to the cytoplasm. Specifically methylates the N7 position of a guanine in 16S rRNA. This Microcystis aeruginosa (strain NIES-843 / IAM M-2473) protein is Ribosomal RNA small subunit methyltransferase G.